The sequence spans 298 residues: Bifunctional methyltransferase/endonuclease (298 aa).

Positions 1–79 are probable methylated-DNA--protein-cysteine methyltransferase; sequence MQSIDLYSYL…SLGIDEKIRR (79 aa). Cys-56 is an active-site residue. An endonuclease V region spans residues 80–298; that stretch reads LRNDGIEINN…TVALRRNNII (219 aa). Mg(2+)-binding residues include Asp-137 and Asp-197.

This sequence in the N-terminal section; belongs to the MGMT family. The protein in the C-terminal section; belongs to the endonuclease V family. The cofactor is Mg(2+).

The protein localises to the cytoplasm. It carries out the reaction Endonucleolytic cleavage at apurinic or apyrimidinic sites to products with a 5'-phosphate.. In terms of biological role, DNA repair enzyme involved in the repair of deaminated bases. Selectively cleaves double-stranded DNA at the second phosphodiester bond 3' to a deoxyinosine leaving behind the intact lesion on the nicked DNA. This Picrophilus torridus (strain ATCC 700027 / DSM 9790 / JCM 10055 / NBRC 100828 / KAW 2/3) protein is Bifunctional methyltransferase/endonuclease.